The sequence spans 94 residues: Large ribosomal subunit protein eL43B (94 aa).

The segment at cysteine 39–cysteine 62 adopts a C4-type zinc-finger fold.

It belongs to the eukaryotic ribosomal protein eL43 family. In terms of assembly, component of the large ribosomal subunit (LSU). Mature yeast ribosomes consist of a small (40S) and a large (60S) subunit. The 40S small subunit contains 1 molecule of ribosomal RNA (18S rRNA) and at least 33 different proteins. The large 60S subunit contains 3 rRNA molecules (25S, 5.8S and 5S rRNA) and at least 46 different proteins.

It localises to the cytoplasm. Functionally, component of the ribosome, a large ribonucleoprotein complex responsible for the synthesis of proteins in the cell. The small ribosomal subunit (SSU) binds messenger RNAs (mRNAs) and translates the encoded message by selecting cognate aminoacyl-transfer RNA (tRNA) molecules. The large subunit (LSU) contains the ribosomal catalytic site termed the peptidyl transferase center (PTC), which catalyzes the formation of peptide bonds, thereby polymerizing the amino acids delivered by tRNAs into a polypeptide chain. The nascent polypeptides leave the ribosome through a tunnel in the LSU and interact with protein factors that function in enzymatic processing, targeting, and the membrane insertion of nascent chains at the exit of the ribosomal tunnel. This Schizosaccharomyces pombe (strain 972 / ATCC 24843) (Fission yeast) protein is Large ribosomal subunit protein eL43B (rpl4302).